The chain runs to 110 residues: Flagellar hook-basal body complex protein FliE (110 aa).

This sequence belongs to the FliE family.

It is found in the bacterial flagellum basal body. The polypeptide is Flagellar hook-basal body complex protein FliE (Bordetella petrii (strain ATCC BAA-461 / DSM 12804 / CCUG 43448)).